Consider the following 422-residue polypeptide: Killer cell immunoglobulin-like receptor 3DL1 (422 aa).

Residues 1–21 (MMFEFLSLLCSGFFLVQRMSA) form the signal peptide. Topologically, residues 22–329 (HMGSYDKPFL…KNLHIQIGLL (308 aa)) are extracellular. Ig-like C2-type domains follow at residues 42-100 (GQNV…HHQY), 135-202 (GENV…YNHS), and 237-300 (EQNM…FKNS). The N-linked (GlcNAc...) asparagine glycan is linked to Asn-44. Cys-49 and Cys-95 form a disulfide bridge. The N-linked (GlcNAc...) asparagine glycan is linked to Asn-137. A disulfide bond links Cys-142 and Cys-195. N-linked (GlcNAc...) asparagine glycans are attached at residues Asn-200 and Asn-239. Cys-244 and Cys-293 are oxidised to a cystine. Asn-299 carries an N-linked (GlcNAc...) asparagine glycan. The chain crosses the membrane as a helical span at residues 330-350 (VTMVLVIVVIIIIIIIIIIII). The Cytoplasmic portion of the chain corresponds to 351 to 422 (YYYYFSKKSS…DTVVYTEVMI (72 aa)).

It belongs to the immunoglobulin superfamily.

The protein localises to the cell membrane. In terms of biological role, receptor on natural killer (NK) cells. Inhibits the activity of NK cells thus preventing cell lysis. This Rattus norvegicus (Rat) protein is Killer cell immunoglobulin-like receptor 3DL1 (Kir3dl1).